The chain runs to 407 residues: Homeobox even-skipped homolog protein 1 (407 aa).

2 disordered regions span residues 29 to 120 (EAVG…SDFY) and 137 to 179 (EYQH…ACSA). Polar residues predominate over residues 102 to 114 (DSLSGQGQPSSSD). Positions 183-242 (MRRYRTAFTREQIARLEKEFYRENYVSRPRRCELAAALNLPETTIKVWFQNRRMKDKRQR) form a DNA-binding region, homeobox.

This sequence belongs to the even-skipped homeobox family.

The protein localises to the nucleus. In terms of biological role, may play a role in the specification of neuronal cell types. In Homo sapiens (Human), this protein is Homeobox even-skipped homolog protein 1 (EVX1).